The chain runs to 199 residues: GTP cyclohydrolase-2 (199 aa).

GTP is bound at residue 49-53 (RIHSE). Zn(2+) contacts are provided by Cys-54, Cys-65, and Cys-67. GTP-binding positions include Gln-70, 92-94 (EGR), and Thr-114. Residue Asp-126 is the Proton acceptor of the active site. The active-site Nucleophile is the Arg-128. Residues Thr-149 and Lys-154 each coordinate GTP.

Belongs to the GTP cyclohydrolase II family. In terms of assembly, homodimer. Zn(2+) serves as cofactor.

The catalysed reaction is GTP + 4 H2O = 2,5-diamino-6-hydroxy-4-(5-phosphoribosylamino)-pyrimidine + formate + 2 phosphate + 3 H(+). The protein operates within cofactor biosynthesis; riboflavin biosynthesis; 5-amino-6-(D-ribitylamino)uracil from GTP: step 1/4. Its function is as follows. Catalyzes the conversion of GTP to 2,5-diamino-6-ribosylamino-4(3H)-pyrimidinone 5'-phosphate (DARP), formate and pyrophosphate. This Blochmanniella floridana protein is GTP cyclohydrolase-2.